A 281-amino-acid chain; its full sequence is Phosphatidylglycerol--prolipoprotein diacylglyceryl transferase (281 aa).

4 helical membrane passes run 23-43 (VGPL…LFAW), 71-91 (FVIW…VLFY), 107-127 (WDGG…MILF), and 133-153 (ILVW…LGVV). Position 154 (Arg154) interacts with a 1,2-diacyl-sn-glycero-3-phospho-(1'-sn-glycerol). Transmembrane regions (helical) follow at residues 189 to 209 (LYEA…LVWG), 217 to 237 (GFVA…VEFF), and 247 to 267 (LFGG…LLGL).

This sequence belongs to the Lgt family.

Its subcellular location is the cell inner membrane. The enzyme catalyses L-cysteinyl-[prolipoprotein] + a 1,2-diacyl-sn-glycero-3-phospho-(1'-sn-glycerol) = an S-1,2-diacyl-sn-glyceryl-L-cysteinyl-[prolipoprotein] + sn-glycerol 1-phosphate + H(+). The protein operates within protein modification; lipoprotein biosynthesis (diacylglyceryl transfer). In terms of biological role, catalyzes the transfer of the diacylglyceryl group from phosphatidylglycerol to the sulfhydryl group of the N-terminal cysteine of a prolipoprotein, the first step in the formation of mature lipoproteins. The chain is Phosphatidylglycerol--prolipoprotein diacylglyceryl transferase from Brucella abortus (strain S19).